The following is a 310-amino-acid chain: Olfactory receptor 5P1 (310 aa).

Over 1–25 (MEPGNHTAVTKFILLGLTDDPTLCV) the chain is Extracellular. A glycan (N-linked (GlcNAc...) asparagine) is linked at N5. Residues 26-46 (IFFVFFLGIYIVTLVGNISII) form a helical membrane-spanning segment. At 47 to 54 (NLVRSCPQ) the chain is on the cytoplasmic side. A helical transmembrane segment spans residues 55 to 75 (LQTPMYMFLSHLAFVDIGYST). At 76–99 (SVTPIMLIGFIVHETGLPVHACEA) the chain is on the extracellular side. An intrachain disulfide couples C97 to C189. A helical transmembrane segment spans residues 100–120 (QLCSVVTFGTAECFLLAAMAY). Over 121–133 (DRYVAICSPLLYS) the chain is Cytoplasmic. The helical transmembrane segment at 134–154 (THMSSQICLLLVGASYVGGCV) threads the bilayer. The Extracellular portion of the chain corresponds to 155–196 (NAWTFTGCLLSLSFCGPNKIDHFFCDFSPLLKLSCSDVSIIG). The chain crosses the membrane as a helical span at residues 197-217 (IIPSISAGSIIVVTVFVISVS). Residues 218-237 (YIYILITILKMRSTEGRHKA) lie on the Cytoplasmic side of the membrane. Residues 238 to 258 (FSTCTSHLTAVTLYYGTITFI) form a helical membrane-spanning segment. Topologically, residues 259–271 (YVMPKSSYSTKQN) are extracellular. The helical transmembrane segment at 272-292 (RVVSLFYTVVIPMLNPLIYSL) threads the bilayer. The Cytoplasmic portion of the chain corresponds to 293 to 310 (RNRDVKEALRKATLRIYS).

It belongs to the G-protein coupled receptor 1 family.

It localises to the cell membrane. Its function is as follows. Potential odorant receptor. This Mus musculus (Mouse) protein is Olfactory receptor 5P1.